Consider the following 76-residue polypeptide: Exodeoxyribonuclease 7 small subunit (76 aa).

This sequence belongs to the XseB family. In terms of assembly, heterooligomer composed of large and small subunits.

It is found in the cytoplasm. The catalysed reaction is Exonucleolytic cleavage in either 5'- to 3'- or 3'- to 5'-direction to yield nucleoside 5'-phosphates.. Bidirectionally degrades single-stranded DNA into large acid-insoluble oligonucleotides, which are then degraded further into small acid-soluble oligonucleotides. This is Exodeoxyribonuclease 7 small subunit from Bacillus mycoides (strain KBAB4) (Bacillus weihenstephanensis).